Consider the following 1039-residue polypeptide: FHIP family protein GG24907 (1039 aa).

A phosphoserine mark is found at Ser-498 and Ser-805. Disordered stretches follow at residues 831-877 (ATPT…SASS), 904-945 (GISQ…SNSS), and 957-984 (SNTT…SEPA). Composition is skewed to polar residues over residues 855–877 (TSMF…SASS) and 904–924 (GISQ…TQPQ). The segment covering 925-945 (AGASRTGATATSAAASGSNSS) has biased composition (low complexity). A compositionally biased stretch (polar residues) spans 957-966 (SNTTTHSAST).

It belongs to the FHIP family.

The chain is FHIP family protein GG24907 from Drosophila erecta (Fruit fly).